Consider the following 532-residue polypeptide: Cytochrome P450 monooxygenase criE (532 aa).

The chain crosses the membrane as a helical span at residues 18 to 38 (VSPAALSWAVVAVYIGTFFWL). Position 441 (Cys-441) interacts with heme.

This sequence belongs to the cytochrome P450 family. The cofactor is heme.

It localises to the membrane. The catalysed reaction is preechinulin + reduced [NADPH--hemoprotein reductase] + O2 = neoechinulin A + oxidized [NADPH--hemoprotein reductase] + 2 H2O + H(+). The protein operates within secondary metabolite biosynthesis. It participates in alkaloid biosynthesis. Cytochrome P450 monooxygenase; part of the gene cluster that mediates the biosynthesis of echinulin family alkaloid. The pathway begins with the biosynthesis of the cyclic dipeptide cyclo-L-Trp-L-Ala (cyclo-TA) by the NRPS criC via condensation of L-alanine and L-tryptophan. The prenyltransferase criA then catalyzes the first prenylation step, a reverse prenylation reaction at C2, to yield preechinulin. Preechinulin is the substrate of the cytochrome P450 monooxygenase criE that catalyzes the formation of the double bond between C10 and C11 to produce neoechulin A. The unique prenyltransferase criF functions as a competitive enzyme with criE for preechinulin metabolization and uses preechinulin for effective regiospecific prenylations. Preechinulin is prenylated by criF at C5 or C7. C7-prenylation leads to accumulation of tardioxopiperazine B without further modification by criF. In contrast, the C5-prenylated tardioxopiperazine A can be prenylated again by criF, predominantly at C7 to form echinulin or less frequently at C4 to give variecolorin L. CriF also accepts neoechilunin A to produce varlecolorin G (prenylation at C5) or isoechinulin A (prenylation at C7). CriF further converts isoechinulin A into dehydroechinulin. Moreover, a yet unidentified enzyme can also convert neoechilunin A into neoechilunin B by introducing a double bond between positions C14 and C17 and thus provides a further substrate to criF for C5 and C7 prenylation. This Aspergillus cristatus (Chinese Fuzhuan brick tea-fermentation fungus) protein is Cytochrome P450 monooxygenase criE.